The primary structure comprises 561 residues: Potassium-transporting ATPase potassium-binding subunit (561 aa).

The next 10 membrane-spanning stretches (helical) occupy residues isoleucine 4–isoleucine 24, alanine 65–leucine 85, isoleucine 133–valine 153, leucine 177–valine 197, phenylalanine 253–phenylalanine 273, alanine 285–glutamate 305, glycine 380–glycine 400, methionine 417–valine 437, methionine 484–leucine 504, and phenylalanine 528–leucine 548.

It belongs to the KdpA family. As to quaternary structure, the system is composed of three essential subunits: KdpA, KdpB and KdpC.

It localises to the cell membrane. Part of the high-affinity ATP-driven potassium transport (or Kdp) system, which catalyzes the hydrolysis of ATP coupled with the electrogenic transport of potassium into the cytoplasm. This subunit binds the extracellular potassium ions and delivers the ions to the membrane domain of KdpB through an intramembrane tunnel. The sequence is that of Potassium-transporting ATPase potassium-binding subunit from Listeria monocytogenes serotype 4b (strain CLIP80459).